Reading from the N-terminus, the 61-residue chain is Alpha-conotoxin-like Sm1.1 (61 aa).

A signal peptide spans 1–16 (MFTVFLLVVLATTVVS). Positions 17–43 (FPSDRASDGRDDEAKDERSDMHESGRK) are excised as a propeptide. The segment at 19–46 (SDRASDGRDDEAKDERSDMHESGRKGRG) is disordered. Positions 21-42 (RASDGRDDEAKDERSDMHESGR) are enriched in basic and acidic residues. 2 disulfides stabilise this stretch: C48/C53 and C49/C59. The residue at position 55 (P55) is a 4-hydroxyproline; partial. At C59 the chain carries Cysteine amide.

This sequence belongs to the conotoxin A superfamily. As to expression, expressed by the venom duct.

The protein resides in the secreted. Functionally, alpha-conotoxins act on postsynaptic membranes, they bind to the nicotinic acetylcholine receptors (nAChR) and thus inhibit them. This chain is Alpha-conotoxin-like Sm1.1, found in Conus stercusmuscarum (Fly-specked cone).